Consider the following 607-residue polypeptide: Arginine decarboxylase (607 aa).

Residue Lys-104 is modified to N6-(pyridoxal phosphate)lysine. A substrate-binding site is contributed by 290-300; it reads LDCGGGLGVDY.

It belongs to the Orn/Lys/Arg decarboxylase class-II family. SpeA subfamily. The cofactor is pyridoxal 5'-phosphate. It depends on Mg(2+) as a cofactor.

It carries out the reaction L-arginine + H(+) = agmatine + CO2. Its pathway is amine and polyamine biosynthesis; agmatine biosynthesis; agmatine from L-arginine: step 1/1. The polypeptide is Arginine decarboxylase (SPE1) (Avena sativa (Oat)).